A 186-amino-acid chain; its full sequence is ATP synthase subunit b (186 aa).

The chain crosses the membrane as a helical span at residues 28 to 48; sequence IVWSIIPFAVILFVFWKFVLP.

It belongs to the ATPase B chain family. As to quaternary structure, F-type ATPases have 2 components, F(1) - the catalytic core - and F(0) - the membrane proton channel. F(1) has five subunits: alpha(3), beta(3), gamma(1), delta(1), epsilon(1). F(0) has three main subunits: a(1), b(2) and c(10-14). The alpha and beta chains form an alternating ring which encloses part of the gamma chain. F(1) is attached to F(0) by a central stalk formed by the gamma and epsilon chains, while a peripheral stalk is formed by the delta and b chains.

Its subcellular location is the cell membrane. In terms of biological role, f(1)F(0) ATP synthase produces ATP from ADP in the presence of a proton or sodium gradient. F-type ATPases consist of two structural domains, F(1) containing the extramembraneous catalytic core and F(0) containing the membrane proton channel, linked together by a central stalk and a peripheral stalk. During catalysis, ATP synthesis in the catalytic domain of F(1) is coupled via a rotary mechanism of the central stalk subunits to proton translocation. Functionally, component of the F(0) channel, it forms part of the peripheral stalk, linking F(1) to F(0). The sequence is that of ATP synthase subunit b from Corynebacterium jeikeium (strain K411).